We begin with the raw amino-acid sequence, 366 residues long: Alanine racemase (366 aa).

The active-site Proton acceptor; specific for D-alanine is Lys-33. Lys-33 bears the N6-(pyridoxal phosphate)lysine mark. Arg-129 is a binding site for substrate. The Proton acceptor; specific for L-alanine role is filled by Tyr-253. Met-301 contributes to the substrate binding site.

Belongs to the alanine racemase family. The cofactor is pyridoxal 5'-phosphate.

It carries out the reaction L-alanine = D-alanine. It participates in amino-acid biosynthesis; D-alanine biosynthesis; D-alanine from L-alanine: step 1/1. In terms of biological role, catalyzes the interconversion of L-alanine and D-alanine. May also act on other amino acids. In Xanthomonas oryzae pv. oryzae (strain MAFF 311018), this protein is Alanine racemase (alr).